The primary structure comprises 528 residues: Peptide chain release factor 3 (528 aa).

Positions 9–280 constitute a tr-type G domain; that stretch reads RRRRTFAIIS…LKLAPAPAPR (272 aa). Residues 18–25, 86–90, and 140–143 contribute to the GTP site; these read SHPDAGKT, DTPGH, and NKLD.

Belongs to the TRAFAC class translation factor GTPase superfamily. Classic translation factor GTPase family. PrfC subfamily.

It localises to the cytoplasm. In terms of biological role, increases the formation of ribosomal termination complexes and stimulates activities of RF-1 and RF-2. It binds guanine nucleotides and has strong preference for UGA stop codons. It may interact directly with the ribosome. The stimulation of RF-1 and RF-2 is significantly reduced by GTP and GDP, but not by GMP. The sequence is that of Peptide chain release factor 3 from Symbiobacterium thermophilum (strain DSM 24528 / JCM 14929 / IAM 14863 / T).